The chain runs to 729 residues: E3 ubiquitin-protein ligase Trim36 (729 aa).

The segment at 33–84 (CPACKELFTHPLILPCQHSVCHKCVKELLLSLDDSFNDVASDSSNQSSPRLR) adopts an RING-type; degenerate zinc-finger fold. B box-type zinc fingers lie at residues 154–192 (AIMC…WGTV) and 207–249 (PKVL…VTTM). Zn(2+)-binding residues include C212, H215, C235, and H241. Positions 271–302 (ESQVKSQISELNLLMKETECNGERAKEEALAH) form a coiled coil. Residues 356–413 (LKETDQSCFVQTAKQLHLRIQKATESLKSFRPAAQASFEDYVVNISKQTEVLGELSFF) form the COS domain. The 96-residue stretch at 416-511 (GIDIPEINEE…RELILHTPPA (96 aa)) folds into the Fibronectin type-III domain. In terms of domain architecture, B30.2/SPRY spans 509–723 (PPAPVFSFLF…LEEAITAKYL (215 aa)). The segment at 606–626 (RDAASPRYEQDSGHDSGSEDA) is disordered. Positions 613 to 622 (YEQDSGHDSG) are enriched in basic and acidic residues.

This sequence belongs to the TRIM/RBCC family. As to quaternary structure, interacts with CENPH. In terms of tissue distribution, expressed in testis. Strongly expressed in the neural tube region in 14.5 dpc embryos.

Its subcellular location is the cytoplasm. The protein localises to the cytoplasmic vesicle. It is found in the secretory vesicle. It localises to the acrosome. The protein resides in the cytoskeleton. It catalyses the reaction S-ubiquitinyl-[E2 ubiquitin-conjugating enzyme]-L-cysteine + [acceptor protein]-L-lysine = [E2 ubiquitin-conjugating enzyme]-L-cysteine + N(6)-ubiquitinyl-[acceptor protein]-L-lysine.. Functionally, E3 ubiquitin-protein ligase which mediates ubiquitination and subsequent proteasomal degradation of target proteins. Involved in chromosome segregation and cell cycle regulation. May play a role in the acrosome reaction and fertilization. The sequence is that of E3 ubiquitin-protein ligase Trim36 (Trim36) from Mus musculus (Mouse).